A 336-amino-acid chain; its full sequence is Holliday junction branch migration complex subunit RuvB (336 aa).

A large ATPase domain (RuvB-L) region spans residues 1 to 183 (MTEEHLTSQE…FGIVEHMQYY (183 aa)). ATP-binding positions include Leu-22, Arg-23, Gly-64, Lys-67, Thr-68, Thr-69, 130-132 (EDF), Arg-173, Tyr-183, and Arg-220. Residue Thr-68 participates in Mg(2+) binding. A small ATPAse domain (RuvB-S) region spans residues 184–254 (QVEDLEKIIL…TTAMALKQLQ (71 aa)). The tract at residues 257–336 (SAGLDQTDRK…LNLPLPGEEE (80 aa)) is head domain (RuvB-H). Residues Arg-293 and Arg-317 each contribute to the DNA site.

This sequence belongs to the RuvB family. As to quaternary structure, homohexamer. Forms an RuvA(8)-RuvB(12)-Holliday junction (HJ) complex. HJ DNA is sandwiched between 2 RuvA tetramers; dsDNA enters through RuvA and exits via RuvB. An RuvB hexamer assembles on each DNA strand where it exits the tetramer. Each RuvB hexamer is contacted by two RuvA subunits (via domain III) on 2 adjacent RuvB subunits; this complex drives branch migration. In the full resolvosome a probable DNA-RuvA(4)-RuvB(12)-RuvC(2) complex forms which resolves the HJ.

It localises to the cytoplasm. The catalysed reaction is ATP + H2O = ADP + phosphate + H(+). Its function is as follows. The RuvA-RuvB-RuvC complex processes Holliday junction (HJ) DNA during genetic recombination and DNA repair, while the RuvA-RuvB complex plays an important role in the rescue of blocked DNA replication forks via replication fork reversal (RFR). RuvA specifically binds to HJ cruciform DNA, conferring on it an open structure. The RuvB hexamer acts as an ATP-dependent pump, pulling dsDNA into and through the RuvAB complex. RuvB forms 2 homohexamers on either side of HJ DNA bound by 1 or 2 RuvA tetramers; 4 subunits per hexamer contact DNA at a time. Coordinated motions by a converter formed by DNA-disengaged RuvB subunits stimulates ATP hydrolysis and nucleotide exchange. Immobilization of the converter enables RuvB to convert the ATP-contained energy into a lever motion, pulling 2 nucleotides of DNA out of the RuvA tetramer per ATP hydrolyzed, thus driving DNA branch migration. The RuvB motors rotate together with the DNA substrate, which together with the progressing nucleotide cycle form the mechanistic basis for DNA recombination by continuous HJ branch migration. Branch migration allows RuvC to scan DNA until it finds its consensus sequence, where it cleaves and resolves cruciform DNA. The sequence is that of Holliday junction branch migration complex subunit RuvB from Lactobacillus delbrueckii subsp. bulgaricus (strain ATCC 11842 / DSM 20081 / BCRC 10696 / JCM 1002 / NBRC 13953 / NCIMB 11778 / NCTC 12712 / WDCM 00102 / Lb 14).